A 20-amino-acid chain; its full sequence is Glutathione S-transferase 2 (20 aa).

The GST N-terminal domain maps to 1–20 (GYKVTYFAIRGLAEPIXLLL). Tyr6 contacts glutathione.

The protein belongs to the GST superfamily. Sigma family.

It catalyses the reaction RX + glutathione = an S-substituted glutathione + a halide anion + H(+). Functionally, conjugation of reduced glutathione to a wide number of exogenous and endogenous hydrophobic electrophiles. This chain is Glutathione S-transferase 2 (GST2), found in Ascaris suum (Pig roundworm).